An 877-amino-acid chain; its full sequence is Phosphoenolpyruvate carboxylase (877 aa).

Catalysis depends on residues histidine 137 and lysine 542.

Belongs to the PEPCase type 1 family. Mg(2+) is required as a cofactor.

The catalysed reaction is oxaloacetate + phosphate = phosphoenolpyruvate + hydrogencarbonate. Functionally, forms oxaloacetate, a four-carbon dicarboxylic acid source for the tricarboxylic acid cycle. The chain is Phosphoenolpyruvate carboxylase from Tolumonas auensis (strain DSM 9187 / NBRC 110442 / TA 4).